A 233-amino-acid chain; its full sequence is Endo-1,4-beta-xylanase 1 (233 aa).

An N-terminal signal peptide occupies residues 1 to 20 (MVSFTSIVTAVVALAGSALA). N27 is a glycosylation site (N-linked (GlcNAc...) asparagine). Residues 40–230 (QSTPSSTGRH…SAGNSNINVQ (191 aa)) form the GH11 domain. E126 serves as the catalytic Nucleophile. Residue E217 is the Proton donor of the active site.

Belongs to the glycosyl hydrolase 11 (cellulase G) family.

It is found in the secreted. It catalyses the reaction Endohydrolysis of (1-&gt;4)-beta-D-xylosidic linkages in xylans.. It participates in glycan degradation; xylan degradation. Functionally, endo-1,4-beta-xylanase involved in the hydrolysis of xylan, a major structural heterogeneous polysaccharide found in plant biomass representing the second most abundant polysaccharide in the biosphere, after cellulose. Accounts for approximately 70 percent of the endoxylanase activity in the culture filtrate. This Pyricularia grisea (Crabgrass-specific blast fungus) protein is Endo-1,4-beta-xylanase 1 (XYL1).